The primary structure comprises 648 residues: Proton myo-inositol cotransporter (648 aa).

Topologically, residues Met-1–Glu-76 are cytoplasmic. Phosphoserine is present on residues Ser-6, Ser-47, and Ser-50. The chain crosses the membrane as a helical span at residues Thr-77 to Tyr-97. Over Asp-98–Ser-125 the chain is Extracellular. A helical transmembrane segment spans residues Ser-126–Gly-146. Over Arg-147–Arg-148 the chain is Cytoplasmic. The helical transmembrane segment at Ala-149–Asn-169 threads the bilayer. The Extracellular portion of the chain corresponds to Asn-170–Arg-178. Residues Leu-179–Val-199 form a helical membrane-spanning segment. Over Ser-200–Asn-212 the chain is Cytoplasmic. The helical transmembrane segment at Thr-213–Leu-233 threads the bilayer. The Extracellular segment spans residues Gln-234–Arg-239. The helical transmembrane segment at Tyr-240–Pro-260 threads the bilayer. The Cytoplasmic portion of the chain corresponds to Glu-261–Arg-324. Residues Ala-325–Met-345 form a helical membrane-spanning segment. At Tyr-346 to Ala-363 the chain is on the extracellular side. The chain crosses the membrane as a helical span at residues Ile-364 to Leu-384. The Cytoplasmic portion of the chain corresponds to Val-385–Leu-393. Residues Thr-394–Leu-414 traverse the membrane as a helical segment. At Ser-415–Thr-508 the chain is on the extracellular side. Residues Asn-433, Asn-458, and Asn-485 are each glycosylated (N-linked (GlcNAc...) asparagine). A helical membrane pass occupies residues Ala-509 to Trp-529. The Cytoplasmic portion of the chain corresponds to Thr-530–Ser-549. The helical transmembrane segment at Gly-550–Leu-570 threads the bilayer. Over Thr-571–Tyr-573 the chain is Extracellular. The chain crosses the membrane as a helical span at residues Gly-574–Leu-594. Topologically, residues Pro-595–Glu-648 are cytoplasmic. Residues Ser-640 and Ser-645 each carry the phosphoserine modification.

It belongs to the major facilitator superfamily. Sugar transporter (TC 2.A.1.1) family. Post-translationally, glycosylated. In terms of tissue distribution, predominantly expressed in the brain.

The protein localises to the cell membrane. The catalysed reaction is myo-inositol(out) + H(+)(out) = myo-inositol(in) + H(+)(in). Functionally, h(+)-myo-inositol cotransporter. Can also transport related stereoisomers. This is Proton myo-inositol cotransporter from Homo sapiens (Human).